The sequence spans 352 residues: DNA integrity scanning protein DisA (352 aa).

The DAC domain occupies 3–143 (PQELIEKIKL…NYKYVVNQVD (141 aa)). ATP contacts are provided by residues glycine 71, leucine 89, and 102-106 (TRHRT).

The protein belongs to the DisA family. In terms of assembly, homooctamer. Mg(2+) is required as a cofactor.

It catalyses the reaction 2 ATP = 3',3'-c-di-AMP + 2 diphosphate. Its function is as follows. Participates in a DNA-damage check-point. DisA forms globular foci that rapidly scan along the chromosomes searching for lesions. Also has diadenylate cyclase activity, catalyzing the condensation of 2 ATP molecules into cyclic di-AMP (c-di-AMP). c-di-AMP likely acts as a signaling molecule that may couple DNA integrity with a cellular process. This chain is DNA integrity scanning protein DisA, found in Thermotoga petrophila (strain ATCC BAA-488 / DSM 13995 / JCM 10881 / RKU-1).